Consider the following 628-residue polypeptide: Choline transporter-like protein 2 (628 aa).

Residues 1 to 31 (MSSEDLQDHHEIGNEVIKKKGVYTKKKCQDC) are Cytoplasmic-facing. The helical transmembrane segment at 32–52 (FFLILFLLFWAGMIVVAAFGV) threads the bilayer. At 53-204 (KNGKPDRIVK…EILTDLTNSW (152 aa)) the chain is on the extracellular side. Residues asparagine 82, asparagine 118, asparagine 146, and asparagine 168 are each glycosylated (N-linked (GlcNAc...) asparagine). A helical transmembrane segment spans residues 205–225 (RYLIYGALIAMGLGLTWIFLL). Residue arginine 226 is a topological domain, cytoplasmic. The helical transmembrane segment at 227-247 (FFAGFITWLTVFAAYACLGLL) threads the bilayer. The Extracellular segment spans residues 248-282 (TAQVYFQWQDSKDAYENTIPSQRLVMQEKNILALK). A helical membrane pass occupies residues 283–303 (VIFIILCVVCGIFALILLALF). The Cytoplasmic segment spans residues 304-319 (SRIRIAIRIIKECSRA). A helical membrane pass occupies residues 320-340 (IGIMPSIFFFPIFIFLLLCGF). Topologically, residues 341–381 (TVYWVYIGVYLATAGSPTYDDQYRFTGYEADSKLQKIQIYH) are extracellular. The helical transmembrane segment at 382-402 (FFGYLWTFAFILALNQTTIAG) threads the bilayer. Residues 403–432 (AISSWYWVQDKKDTPFFPVWSSFFRVIRYH) are Cytoplasmic-facing. Residues 433–453 (LGSIALGSLILAIVQFIRWVL) traverse the membrane as a helical segment. The Extracellular segment spans residues 454–530 (RFLEKKFKGK…RVAAVNLVSS (77 aa)). Residues 531–551 (FLMFLGRVFITAATVGISLYL) traverse the membrane as a helical segment. At 552 to 559 (LKEHENLS) the chain is on the cytoplasmic side. Residues 560 to 580 (FYIIPVILIGFIAFAISTGFM) form a helical membrane-spanning segment. At 581-628 (SVYDMSIDTMLLCFCEDCERNDGSPERPYYMSKSLRKFVDGKGRSKCC) the chain is on the extracellular side.

The protein belongs to the CTL (choline transporter-like) family.

It localises to the cell membrane. It is found in the mitochondrion outer membrane. The enzyme catalyses choline(out) + n H(+)(in) = choline(in) + n H(+)(out). It catalyses the reaction ethanolamine(out) + n H(+)(in) = ethanolamine(in) + n H(+)(out). Its function is as follows. Choline/H+ antiporter, mainly in mitochodria. Also acts as a low-affinity ethanolamine/H+ antiporter, regulating the supply of extracellular ethanolamine (Etn) for the CDP-Etn pathway, redistribute intracellular Etn and balance the CDP-Cho and CDP-Etn arms of the Kennedy pathway. The protein is Choline transporter-like protein 2 (slc44a2) of Dictyostelium discoideum (Social amoeba).